Here is an 824-residue protein sequence, read N- to C-terminus: Silver exporting P-type ATPase (824 aa).

Positions 89–112 (ASEHHHHHDHHEVSPDKIKQSHRQ) are disordered. Residues 98 to 112 (HHEVSPDKIKQSHRQ) show a composition bias toward basic and acidic residues. 6 helical membrane passes run 167–187 (FWLG…SHLF), 200–220 (TWLQ…PFFA), 234–254 (FTLV…ATVF), 268–288 (LVAI…LGQV), 427–447 (WFVP…SVWG), and 455–475 (GLIA…GLAT). The 4-aspartylphosphate intermediate role is filled by Asp-511. 2 helical membrane passes run 764–784 (IRQN…VAAG) and 785–805 (LLYP…AMAL).

It belongs to the cation transport ATPase (P-type) (TC 3.A.3) family. Type IB subfamily.

It localises to the cell membrane. The catalysed reaction is Ag(+)(in) + ATP + H2O = Ag(+)(out) + ADP + phosphate + H(+). Component of the sil cation-efflux system that confers resistance to silver. This chain is Silver exporting P-type ATPase (silP), found in Salmonella typhimurium.